Here is a 435-residue protein sequence, read N- to C-terminus: Evolutionarily conserved signaling intermediate in Toll pathway, mitochondrial (435 aa).

The transit peptide at 1 to 48 (MSWVQVNLLVRSLSRGWGGLCRPALSGTPFAQVSLQALRGLHCSAATH) directs the protein to the mitochondrion. A Glycyl lysine isopeptide (Lys-Gly) (interchain with G-Cter in ubiquitin) cross-link involves residue K372. The interval 401–435 (LTTSRLEGQSPPHSPPKGPEEDDETIQAEQQQGQS) is disordered.

This sequence belongs to the ECSIT family. In terms of assembly, interacts with MAP3K1, SMAD4 and TRAF6. Interacts with SMAD1 only after BMP4-treatment. Part of the mitochondrial complex I assembly/MCIA complex that comprises at least the core subunits TMEM126B, NDUFAF1, ECSIT and ACAD9 and complement subunits such as COA1 and TMEM186. Interacts with NDUFAF1. Interacts with ACAD9. Interacts with TRIM59. Interacts with TMEM70 and TMEM242. Interacts (when ubiquitinated) with NF-kappa-B subunits RELA and NFKB1. Interacts with RIGI, IFIT1 and MAVS; these interactions promote RLR-mediated type I IFN induction. Interacts with SQSTM1; this interaction inhibits TLR4 signaling via functional regulation of the TRAF6-ECSIT complex. Interacts with cereblon/CRBN; this interaction inhibits the ubiquitination of ECSIT. Post-translationally, ubiquitinated on Lys-372; leading to translocation in the nucleus together with RELA and NFKB1 and expression of NF-kappa-B-dependent genes. As to expression, detected in heart, brain, lung, liver, skeletal muscle, kidney and testis. Detected in embryonic mesoderm and epiblast, and in extraembryonic ectoderm.

The protein localises to the cytoplasm. The protein resides in the nucleus. Its subcellular location is the mitochondrion. In terms of biological role, adapter protein that plays a role in different signaling pathways including TLRs and IL-1 pathways or innate antiviral induction signaling. Plays a role in the activation of NF-kappa-B by forming a signal complex with TRAF6 and TAK1/MAP3K7 to activate TAK1/MAP3K7 leading to activation of IKKs. Once ubiquitinated, interacts with the dissociated RELA and NFKB1 proteins and translocates to the nucleus where it induces NF-kappa-B-dependent gene expression. Plays a role in innate antiviral immune response by bridging the pattern recognition receptors RIGI and MDA5/IFIT1 to the MAVS complex at the mitochondrion. Promotes proteolytic activation of MAP3K1. Involved in the BMP signaling pathway. Required for normal embryonic development. Functionally, as part of the MCIA complex, involved in the assembly of the mitochondrial complex I. The sequence is that of Evolutionarily conserved signaling intermediate in Toll pathway, mitochondrial from Mus musculus (Mouse).